Reading from the N-terminus, the 129-residue chain is Glycine cleavage system H protein (129 aa).

In terms of domain architecture, Lipoyl-binding spans 24–106 (TYTVGITEHA…YAGGWIFKIK (83 aa)). An N6-lipoyllysine modification is found at lysine 65.

The protein belongs to the GcvH family. As to quaternary structure, the glycine cleavage system is composed of four proteins: P, T, L and H. Requires (R)-lipoate as cofactor.

In terms of biological role, the glycine cleavage system catalyzes the degradation of glycine. The H protein shuttles the methylamine group of glycine from the P protein to the T protein. In Escherichia fergusonii (strain ATCC 35469 / DSM 13698 / CCUG 18766 / IAM 14443 / JCM 21226 / LMG 7866 / NBRC 102419 / NCTC 12128 / CDC 0568-73), this protein is Glycine cleavage system H protein.